The sequence spans 250 residues: Probable ABC transporter permease protein BAB2_1148 (250 aa).

The next 6 membrane-spanning stretches (helical) occupy residues 12-32 (LLSF…GAVV), 63-83 (VLSG…LMGW), 94-114 (WVQF…IVTL), 122-142 (IFVI…QGVI), 172-192 (VPFI…TVVA), and 211-231 (LYYD…LGLF). Residues 56-236 (IFASLRRVLS…ILGLFMDRLL (181 aa)) form the ABC transmembrane type-1 domain.

It belongs to the binding-protein-dependent transport system permease family. As to quaternary structure, the complex is composed of two ATP-binding proteins (BAB2_1147), two transmembrane proteins (BAB2_1148) and a solute-binding protein (BAB2_1146).

The protein localises to the cell inner membrane. In terms of biological role, probably part of an ABC transporter complex. Probably responsible for the translocation of the substrate across the membrane. This chain is Probable ABC transporter permease protein BAB2_1148, found in Brucella abortus (strain 2308).